The sequence spans 505 residues: 2-isopropylmalate synthase (505 aa).

The Pyruvate carboxyltransferase domain occupies 5–267 (VYIFDTTLRD…YTNIKTEEIY (263 aa)). Residues D14, H202, H204, and N238 each coordinate Mn(2+). The regulatory domain stretch occupies residues 391–505 (TLEYLHISSG…VNKLIWDSQK (115 aa)).

This sequence belongs to the alpha-IPM synthase/homocitrate synthase family. LeuA type 1 subfamily. As to quaternary structure, homodimer. Mn(2+) is required as a cofactor.

It is found in the cytoplasm. It catalyses the reaction 3-methyl-2-oxobutanoate + acetyl-CoA + H2O = (2S)-2-isopropylmalate + CoA + H(+). The protein operates within amino-acid biosynthesis; L-leucine biosynthesis; L-leucine from 3-methyl-2-oxobutanoate: step 1/4. In terms of biological role, catalyzes the condensation of the acetyl group of acetyl-CoA with 3-methyl-2-oxobutanoate (2-ketoisovalerate) to form 3-carboxy-3-hydroxy-4-methylpentanoate (2-isopropylmalate). This Pelotomaculum thermopropionicum (strain DSM 13744 / JCM 10971 / SI) protein is 2-isopropylmalate synthase.